The chain runs to 329 residues: Probable allantoicase (329 aa).

It belongs to the allantoicase family.

It catalyses the reaction allantoate + H2O = (S)-ureidoglycolate + urea. Its pathway is nitrogen metabolism; (S)-allantoin degradation; (S)-ureidoglycolate from allantoate (aminidohydrolase route): step 1/1. The chain is Probable allantoicase from Nocardia farcinica (strain IFM 10152).